Consider the following 1461-residue polypeptide: A disintegrin and metalloproteinase with thrombospondin motifs adt-1 (1461 aa).

The first 21 residues, 1–21 (MPPFYIVITFLLSTVFRISQS), serve as a signal peptide directing secretion. Residues 22–163 (VHHHLNEEEL…HLQKERHLVY (142 aa)) constitute a propeptide that is removed on maturation. Residue asparagine 69 is glycosylated (N-linked (GlcNAc...) asparagine). Residues 190 to 197 (SFCDTSEQ) carry the Cysteine switch motif. The N-linked (GlcNAc...) asparagine glycan is linked to asparagine 212. One can recognise a Peptidase M12B domain in the interval 233-435 (ITLEIGLFLD…CSVREFNAFL (203 aa)). Residue histidine 388 participates in Zn(2+) binding. The active site involves glutamate 389. Zn(2+) is bound by residues histidine 392 and histidine 398. A disulfide bond links cysteine 405 and cysteine 410. The 83-residue stretch at 464 to 546 (RLPGQRFTAD…TFGLTPVPID (83 aa)) folds into the Disintegrin domain. TSP type-1 domains follow at residues 708 to 759 (HQWE…RDCE), 761 to 802 (FGEW…RPCD), 804 to 852 (EGCW…QKCI), 853 to 898 (SQSW…QQCP), 903 to 952 (LSVW…GPCE), 955 to 1000 (YLTW…IACL), 1035 to 1083 (SIHS…NSCL), 1087 to 1133 (IWSD…PSCS), 1148 to 1200 (APRW…GSCS), 1203 to 1260 (AGGW…NVCS), 1265 to 1321 (DGGW…ARCH), 1324 to 1378 (DGGW…PACD), and 1382 to 1435 (DGEW…RQSP). Disulfide bonds link cysteine 719/cysteine 751, cysteine 723/cysteine 758, and cysteine 735/cysteine 741. Intrachain disulfides connect cysteine 816–cysteine 846, cysteine 820–cysteine 851, cysteine 831–cysteine 836, cysteine 862–cysteine 892, cysteine 866–cysteine 897, and cysteine 877–cysteine 882. Disulfide bonds link cysteine 1047–cysteine 1077, cysteine 1051–cysteine 1082, and cysteine 1062–cysteine 1067. Disulfide bonds link cysteine 1160/cysteine 1194, cysteine 1162/cysteine 1199, cysteine 1173/cysteine 1184, cysteine 1215/cysteine 1253, cysteine 1219/cysteine 1259, cysteine 1231/cysteine 1243, cysteine 1277/cysteine 1314, cysteine 1281/cysteine 1320, cysteine 1292/cysteine 1304, cysteine 1336/cysteine 1372, cysteine 1340/cysteine 1377, and cysteine 1351/cysteine 1362.

Requires Zn(2+) as cofactor. As to expression, in hermaphrodites, expressed in the vulva, head ganglia, ventral nerve cord and amphid neurons. Expressed in the rays of the male tail.

The protein localises to the secreted. Plays a role in ray morphogenesis in the male tail, probably by remodeling the extracellular matrix (ECM) in the cuticle. The polypeptide is A disintegrin and metalloproteinase with thrombospondin motifs adt-1 (Caenorhabditis elegans).